Reading from the N-terminus, the 264-residue chain is COP9 signalosome complex subunit 7b (264 aa).

The residue at position 2 (Ala2) is an N-acetylalanine. The PCI domain maps to 2–159 (AGEQKPSSNL…QLLEVDFCIG (158 aa)). The stretch at 194–237 (RANQYKENHSRTQQQVEAEVTNIKKTLKATASSSAQEMEQQLAE) forms a coiled coil. A compositionally biased stretch (polar residues) spans 223–232 (TASSSAQEME). The disordered stretch occupies residues 223-264 (TASSSAQEMEQQLAERECPPHAEQRQPTKKMSKVKGLVSSRH). Over residues 235–248 (LAERECPPHAEQRQ) the composition is skewed to basic and acidic residues.

The protein belongs to the CSN7/EIF3M family. CSN7 subfamily. As to quaternary structure, component of the CSN complex, composed of COPS1/GPS1, COPS2, COPS3, COPS4, COPS5, COPS6, COPS7 (COPS7A or COPS7B), COPS8 and COPS9. In the complex, it probably interacts directly with COPS1, COPS2, COPS4, COPS5, COPS6 and COPS8. Interacts with EIF3S6.

It is found in the cytoplasm. It localises to the nucleus. Its function is as follows. Component of the COP9 signalosome complex (CSN), a complex involved in various cellular and developmental processes. The CSN complex is an essential regulator of the ubiquitin (Ubl) conjugation pathway by mediating the deneddylation of the cullin subunits of SCF-type E3 ligase complexes, leading to decrease the Ubl ligase activity of SCF-type complexes such as SCF, CSA or DDB2. The complex is also involved in phosphorylation of p53/TP53, JUN, I-kappa-B-alpha/NFKBIA, ITPK1 and IRF8/ICSBP, possibly via its association with CK2 and PKD kinases. CSN-dependent phosphorylation of TP53 and JUN promotes and protects degradation by the Ubl system, respectively. In Bos taurus (Bovine), this protein is COP9 signalosome complex subunit 7b (COPS7B).